Consider the following 158-residue polypeptide: AP-1 complex subunit sigma-1A (158 aa).

At serine 147 the chain carries Phosphoserine.

Belongs to the adaptor complexes small subunit family. Adaptor protein complex 1 (AP-1) is a heterotetramer composed of two large adaptins (gamma-type subunit AP1G1 and beta-type subunit AP1B1), a medium adaptin (mu-type subunit AP1M1 or AP1M2) and a small adaptin (sigma-type subunit AP1S1 or AP1S2 or AP1S3). Widely expressed.

The protein resides in the golgi apparatus. The protein localises to the cytoplasmic vesicle membrane. It is found in the membrane. It localises to the clathrin-coated pit. In terms of biological role, subunit of clathrin-associated adaptor protein complex 1 that plays a role in protein sorting in the late-Golgi/trans-Golgi network (TGN) and/or endosomes. The AP complexes mediate both the recruitment of clathrin to membranes and the recognition of sorting signals within the cytosolic tails of transmembrane cargo molecules. This is AP-1 complex subunit sigma-1A (AP1S1) from Homo sapiens (Human).